Consider the following 497-residue polypeptide: MATMSNDAAAAATWHNNTSTPMDTTEPATNSHNPGETAVIGGPEALLLPSGSGPEEMNRHPLLMAQAHGEHHQPRLLHNFPVIPPPIQQHQQPPLLQQAQPSQIPHPTQPQIDPTMFTQQSGFNWPPIDPNTIAALAQAQLASSHAQFVSLALTLDPTLLSHFLATQQIPPVPQPLVHKKAEMELRVGNRFRLGRKIGSGSFGDIYLGQNIQTNEEVAVKLECVKSKHPQLHIESRLYRIMLGGIGIPEIRWCGQEGDYNVMVMELLGPSLEDLFNFCQRKFSLKTVLLLADQMLSRVEFIHCRDYIHRDIKPDNFLMGLGKRGNLVYIIDFGLAKRYRDSKHQHIAYRENKNLTGTARYASINTHRGIEQSRRDDIESLGYVFMYFNRGTLPWQGLKAVTKRQKYELISEKKISTRVDDLCAGYPEAFAQYLNYCRSLGFEEQPDYGYLRNLFRTLFHRQQFCYDYVFDWNTYKFYNESLEARNNFQQAVPNQRRH.

Disordered stretches follow at residues 1-58 and 86-109; these read MATM…EEMN and PIQQ…HPTQ. The segment covering 14 to 34 has biased composition (polar residues); sequence WHNNTSTPMDTTEPATNSHNP. Low complexity predominate over residues 88–105; that stretch reads QQHQQPPLLQQAQPSQIP. The Protein kinase domain maps to 191-458; that stretch reads FRLGRKIGSG…YLRNLFRTLF (268 aa). Residues 197-205 and K220 contribute to the ATP site; that span reads IGSGSFGDI. D310 acts as the Proton acceptor in catalysis.

The protein belongs to the protein kinase superfamily. CK1 Ser/Thr protein kinase family. Casein kinase I subfamily. As to quaternary structure, monomer. As to expression, expressed throughout larval development and into the adult stage in both hypodermal seam cells and the hermaphrodite specific neuron.

The protein resides in the cytoplasm. The protein localises to the nucleus. Its subcellular location is the chromosome. It localises to the centromere. It is found in the cell junction. The protein resides in the adherens junction. It carries out the reaction L-seryl-[protein] + ATP = O-phospho-L-seryl-[protein] + ADP + H(+). It catalyses the reaction L-threonyl-[protein] + ATP = O-phospho-L-threonyl-[protein] + ADP + H(+). Exhibits substrate-dependent heparin activation. Functionally, essential serine/threonine-protein kinase that regulates diverse cellular growth and survival processes including Wnt signaling, DNA repair and circadian rhythms. Casein kinases are operationally defined by their preferential utilization of acidic proteins. Positively regulates the expression of components of the heterochronic pathway, which regulate developmental timing, such as the transcriptional repressor lin-42 and microRNAs such as let-7. Negatively regulates cell cycle exit and cell fusion to prevent the premature differentiation of hypodermal seam cells into adult cells. Plays a role in regulating axon branching and subsequently, the maturation of the nervous system, most likely by preventing the premature termination of transcripts for proteins such as Ankyrin/unc-44, which are required for maintaining the nervous system. May phosphorylate ssup-72 to promote nervous system maturation. This chain is Casein kinase I isoform delta, found in Caenorhabditis elegans.